The following is a 300-amino-acid chain: Ankyrin repeat domain-containing protein 54 (300 aa).

Residues 1 to 27 form a disordered region; it reads MAAAAGDADDEPRSGHSSSEGECAVAP. An N-acetylalanine modification is found at Ala-2. A phosphoserine mark is found at Ser-58 and Ser-63. The Nuclear localization signal (NLS) motif lies at 99 to 117; sequence RRLGPTGKEVHALKRLRDS. ANK repeat units lie at residues 109–138, 142–171, 175–204, and 208–244; these read HALK…DPCA, KGRT…DPNQ, LGNT…RVDA, and AGRT…IIHM. The tract at residues 141–241 is LYN-binding; that stretch reads DKGRTALHFA…EAVRLEVKQI (101 aa). Residues 283-293 carry the Nuclear export signal (NES) motif; that stretch reads LLASFTSLSLQ.

Interacts (via ankyrin repeat region) with LYN (via SH3-domain) in an activation-independent status of LYN. Forms a multiprotein complex with LYN and HCLS1. Interacts with TSN2, VAV1, DBNL and LASP1.

The protein localises to the nucleus. It localises to the cytoplasm. Its subcellular location is the midbody. In terms of biological role, plays an important role in regulating intracellular signaling events associated with erythroid terminal differentiation. In Homo sapiens (Human), this protein is Ankyrin repeat domain-containing protein 54 (ANKRD54).